The chain runs to 307 residues: Putative serpin A13 (307 aa).

Positions 1–21 (MEASRWWLLVTVLMAGAHCVA) are cleaved as a signal peptide. 2 N-linked (GlcNAc...) asparagine glycosylation sites follow: Asn150 and Asn250.

This sequence belongs to the serpin family.

The protein resides in the secreted. The polypeptide is Putative serpin A13 (SERPINA13P) (Homo sapiens (Human)).